A 276-amino-acid chain; its full sequence is ARL14 effector protein (276 aa).

A disordered region spans residues 159–183; that stretch reads QTEFAPESGKREKRKLTKNASASSD. Residue lysine 176 forms a Glycyl lysine isopeptide (Lys-Gly) (interchain with G-Cter in SUMO2) linkage. A phosphoserine mark is found at serine 182 and serine 266.

In terms of assembly, interacts with ARL14 and MYO1E.

It localises to the cytoplasm. In terms of biological role, through its interaction with ARL14 and MYO1E, may connect MHC class II-containing cytoplasmic vesicles to the actin network and hence controls the movement of these vesicles along the actin cytoskeleton in dendritic cells. This is ARL14 effector protein (Arl14ep) from Rattus norvegicus (Rat).